The chain runs to 143 residues: 3-hydroxyacyl-[acyl-carrier-protein] dehydratase FabZ (143 aa).

Histidine 49 is an active-site residue.

The protein belongs to the thioester dehydratase family. FabZ subfamily.

Its subcellular location is the cytoplasm. The catalysed reaction is a (3R)-hydroxyacyl-[ACP] = a (2E)-enoyl-[ACP] + H2O. Functionally, involved in unsaturated fatty acids biosynthesis. Catalyzes the dehydration of short chain beta-hydroxyacyl-ACPs and long chain saturated and unsaturated beta-hydroxyacyl-ACPs. This is 3-hydroxyacyl-[acyl-carrier-protein] dehydratase FabZ from Wolbachia sp. subsp. Drosophila simulans (strain wRi).